Consider the following 162-residue polypeptide: Putative 4-hydroxy-4-methyl-2-oxoglutarate aldolase (162 aa).

Residues 75 to 78 (GDML) and Arg97 contribute to the substrate site. Asp98 serves as a coordination point for a divalent metal cation.

It belongs to the class II aldolase/RraA-like family. In terms of assembly, homotrimer. Requires a divalent metal cation as cofactor.

The enzyme catalyses 4-hydroxy-4-methyl-2-oxoglutarate = 2 pyruvate. The catalysed reaction is oxaloacetate + H(+) = pyruvate + CO2. Its function is as follows. Catalyzes the aldol cleavage of 4-hydroxy-4-methyl-2-oxoglutarate (HMG) into 2 molecules of pyruvate. Also contains a secondary oxaloacetate (OAA) decarboxylase activity due to the common pyruvate enolate transition state formed following C-C bond cleavage in the retro-aldol and decarboxylation reactions. The polypeptide is Putative 4-hydroxy-4-methyl-2-oxoglutarate aldolase (Pseudomonas paraeruginosa (strain DSM 24068 / PA7) (Pseudomonas aeruginosa (strain PA7))).